The chain runs to 51 residues: Large ribosomal subunit protein eL39 (51 aa).

Belongs to the eukaryotic ribosomal protein eL39 family.

This Pyrobaculum neutrophilum (strain DSM 2338 / JCM 9278 / NBRC 100436 / V24Sta) (Thermoproteus neutrophilus) protein is Large ribosomal subunit protein eL39.